Consider the following 414-residue polypeptide: Serine hydroxymethyltransferase (414 aa).

Residues leucine 121 and 125–127 (GHL) each bind (6S)-5,6,7,8-tetrahydrofolate. The residue at position 229 (lysine 229) is an N6-(pyridoxal phosphate)lysine.

This sequence belongs to the SHMT family. As to quaternary structure, homodimer. Pyridoxal 5'-phosphate serves as cofactor.

It localises to the cytoplasm. The enzyme catalyses (6R)-5,10-methylene-5,6,7,8-tetrahydrofolate + glycine + H2O = (6S)-5,6,7,8-tetrahydrofolate + L-serine. The protein operates within one-carbon metabolism; tetrahydrofolate interconversion. It participates in amino-acid biosynthesis; glycine biosynthesis; glycine from L-serine: step 1/1. Functionally, catalyzes the reversible interconversion of serine and glycine with tetrahydrofolate (THF) serving as the one-carbon carrier. This reaction serves as the major source of one-carbon groups required for the biosynthesis of purines, thymidylate, methionine, and other important biomolecules. Also exhibits THF-independent aldolase activity toward beta-hydroxyamino acids, producing glycine and aldehydes, via a retro-aldol mechanism. The chain is Serine hydroxymethyltransferase from Paracidovorax citrulli (strain AAC00-1) (Acidovorax citrulli).